Consider the following 357-residue polypeptide: Nicotinate-nucleotide--dimethylbenzimidazole phosphoribosyltransferase (357 aa).

Residue Glu-323 is the Proton acceptor of the active site.

It belongs to the CobT family.

The catalysed reaction is 5,6-dimethylbenzimidazole + nicotinate beta-D-ribonucleotide = alpha-ribazole 5'-phosphate + nicotinate + H(+). The protein operates within nucleoside biosynthesis; alpha-ribazole biosynthesis; alpha-ribazole from 5,6-dimethylbenzimidazole: step 1/2. In terms of biological role, catalyzes the synthesis of alpha-ribazole-5'-phosphate from nicotinate mononucleotide (NAMN) and 5,6-dimethylbenzimidazole (DMB). The polypeptide is Nicotinate-nucleotide--dimethylbenzimidazole phosphoribosyltransferase (Nitratidesulfovibrio vulgaris (strain ATCC 29579 / DSM 644 / CCUG 34227 / NCIMB 8303 / VKM B-1760 / Hildenborough) (Desulfovibrio vulgaris)).